The chain runs to 349 residues: Phenylalanine--tRNA ligase alpha subunit (349 aa).

Position 258 (Glu258) interacts with Mg(2+).

The protein belongs to the class-II aminoacyl-tRNA synthetase family. Phe-tRNA synthetase alpha subunit type 1 subfamily. As to quaternary structure, tetramer of two alpha and two beta subunits. The cofactor is Mg(2+).

The protein resides in the cytoplasm. The enzyme catalyses tRNA(Phe) + L-phenylalanine + ATP = L-phenylalanyl-tRNA(Phe) + AMP + diphosphate + H(+). The chain is Phenylalanine--tRNA ligase alpha subunit from Rickettsia canadensis (strain McKiel).